The sequence spans 232 residues: MLSVRNLVHRYGDTVAVDGVSLDVADGECVVVTGANGSGKTTLVRHCNGLLEPDDGEVLVNGTPVGEDLVAARASVGMVFQNPRDGFVGATVGADVAFGPENLGRPREEIDARVADALDAVELGGRRDERVADLSGGEQERVAIAAALAMRPDHLVLDEPFTGLDWPARQSVLDRLRALHAAGTSLIVVTHDLRDVWTLADRVVAMRDGEIALRGDPADVRGALPDAGVRPP.

The ABC transporter domain maps to 2-231; that stretch reads LSVRNLVHRY…GALPDAGVRP (230 aa). 34 to 41 lines the ATP pocket; the sequence is GANGSGKT.

It belongs to the ABC transporter superfamily.

It localises to the cell membrane. In terms of biological role, probably part of an ABC transporter complex. Responsible for energy coupling to the transport system. The chain is Putative ABC transporter ATP-binding protein VNG_2317G from Halobacterium salinarum (strain ATCC 700922 / JCM 11081 / NRC-1) (Halobacterium halobium).